Here is a 474-residue protein sequence, read N- to C-terminus: Bifunctional protein HldE (474 aa).

Residues 1–318 (MKLSMPRFDQ…RAVQREQGSE (318 aa)) form a ribokinase region. Residue 194–197 (NLSE) participates in ATP binding. Asp263 is an active-site residue. The tract at residues 343 to 474 (FTNGCFDILH…AIVEKIRQKG (132 aa)) is cytidylyltransferase.

It in the N-terminal section; belongs to the carbohydrate kinase PfkB family. This sequence in the C-terminal section; belongs to the cytidylyltransferase family. Homodimer.

It carries out the reaction D-glycero-beta-D-manno-heptose 7-phosphate + ATP = D-glycero-beta-D-manno-heptose 1,7-bisphosphate + ADP + H(+). The enzyme catalyses D-glycero-beta-D-manno-heptose 1-phosphate + ATP + H(+) = ADP-D-glycero-beta-D-manno-heptose + diphosphate. It functions in the pathway nucleotide-sugar biosynthesis; ADP-L-glycero-beta-D-manno-heptose biosynthesis; ADP-L-glycero-beta-D-manno-heptose from D-glycero-beta-D-manno-heptose 7-phosphate: step 1/4. The protein operates within nucleotide-sugar biosynthesis; ADP-L-glycero-beta-D-manno-heptose biosynthesis; ADP-L-glycero-beta-D-manno-heptose from D-glycero-beta-D-manno-heptose 7-phosphate: step 3/4. In terms of biological role, catalyzes the phosphorylation of D-glycero-D-manno-heptose 7-phosphate at the C-1 position to selectively form D-glycero-beta-D-manno-heptose-1,7-bisphosphate. Its function is as follows. Catalyzes the ADP transfer from ATP to D-glycero-beta-D-manno-heptose 1-phosphate, yielding ADP-D-glycero-beta-D-manno-heptose. The chain is Bifunctional protein HldE from Pseudomonas aeruginosa (strain UCBPP-PA14).